The following is a 187-amino-acid chain: Apolipophorin-3 (187 aa).

The N-terminal stretch at 1 to 17 is a signal peptide; it reads MAAKFIILLALFALSQA. Positions 18–22 are excised as a propeptide; it reads SVVRR.

This sequence belongs to the insect apolipophorin-3 family. As to quaternary structure, equilibrium between a soluble monomer and a bound lipoprotein form. Apolipophorin-3 associates with lipophorin during lipid loading until each particle contains 9 or 14 molecules of apolipophorin-3. In terms of tissue distribution, hemolymph.

The protein resides in the secreted. In terms of biological role, assists in the loading of diacylglycerol, generated from triacylglycerol stores in the fat body through the action of adipokinetic hormone, into lipophorin, the hemolymph lipoprotein. It increases the lipid carrying capacity of lipophorin by covering the expanding hydrophobic surface resulting from diacylglycerol uptake. It thus plays a critical role in the transport of lipids during flight in several species of insects. This is Apolipophorin-3 from Hyphantria cunea (Fall webworm moth).